Here is a 237-residue protein sequence, read N- to C-terminus: Mitochondrial inner membrane protease atp23 (237 aa).

Position 136 (H136) interacts with a divalent metal cation. The active site involves E137. Residue H140 participates in a divalent metal cation binding.

This sequence belongs to the peptidase M76 family.

It is found in the mitochondrion inner membrane. Has a dual role in the assembly of mitochondrial ATPase. Acts as a protease that removes N-terminal residues of mitochondrial ATPase CF(0) subunit 6 at the intermembrane space side. Also involved in the correct assembly of the membrane-embedded ATPase CF(0) particle, probably mediating association of subunit 6 with the subunit 9 ring. The polypeptide is Mitochondrial inner membrane protease atp23 (atp23) (Aspergillus clavatus (strain ATCC 1007 / CBS 513.65 / DSM 816 / NCTC 3887 / NRRL 1 / QM 1276 / 107)).